Reading from the N-terminus, the 474-residue chain is 3-isopropylmalate dehydratase large subunit (474 aa).

The [4Fe-4S] cluster site is built by Cys355, Cys415, and Cys418.

This sequence belongs to the aconitase/IPM isomerase family. LeuC type 1 subfamily. In terms of assembly, heterodimer of LeuC and LeuD. It depends on [4Fe-4S] cluster as a cofactor.

It carries out the reaction (2R,3S)-3-isopropylmalate = (2S)-2-isopropylmalate. It functions in the pathway amino-acid biosynthesis; L-leucine biosynthesis; L-leucine from 3-methyl-2-oxobutanoate: step 2/4. Functionally, catalyzes the isomerization between 2-isopropylmalate and 3-isopropylmalate, via the formation of 2-isopropylmaleate. This chain is 3-isopropylmalate dehydratase large subunit, found in Shewanella sp. (strain ANA-3).